A 409-amino-acid polypeptide reads, in one-letter code: ATPase ASNA1 homolog (409 aa).

21 to 28 (KGGVGKTT) serves as a coordination point for ATP. Residue Asp-62 is part of the active site. ATP is bound by residues Glu-303 and Asn-330. Residues Cys-342 and Cys-345 each contribute to the Zn(2+) site.

This sequence belongs to the arsA ATPase family. Homodimer.

It localises to the cytoplasm. The protein resides in the endoplasmic reticulum. In terms of biological role, ATPase required for the post-translational delivery of tail-anchored (TA) proteins to the endoplasmic reticulum. Recognizes and selectively binds the transmembrane domain of TA proteins in the cytosol. This complex then targets to the endoplasmic reticulum by membrane-bound receptors, where the tail-anchored protein is released for insertion. This process is regulated by ATP binding and hydrolysis. ATP binding drives the homodimer towards the closed dimer state, facilitating recognition of newly synthesized TA membrane proteins. ATP hydrolysis is required for insertion. Subsequently, the homodimer reverts towards the open dimer state, lowering its affinity for the membrane-bound receptor, and returning it to the cytosol to initiate a new round of targeting. This is ATPase ASNA1 homolog from Leishmania major.